The sequence spans 249 residues: uncharacterized protein (249 aa).

Composition is skewed to polar residues over residues 66–79 and 92–119; these read NASL…TISP and ASGS…SSSE. Residues 66-142 are disordered; the sequence is NASLESGQSS…GPTSPRVTPG (77 aa).

The protein localises to the plastid. Its subcellular location is the chloroplast. This is an uncharacterized protein from Chlorella vulgaris (Green alga).